A 360-amino-acid chain; its full sequence is Chorismate synthase (360 aa).

Positions 36–60 (LSEDDIQPDLDRRKPGTSKYTTPRR) are disordered. Arg-48 contacts NADP(+). FMN is bound by residues 125-127 (RSS), 246-247 (NA), Gly-286, 301-305 (KPTSS), and Arg-327.

It belongs to the chorismate synthase family. In terms of assembly, homotetramer. FMNH2 serves as cofactor.

It carries out the reaction 5-O-(1-carboxyvinyl)-3-phosphoshikimate = chorismate + phosphate. Its pathway is metabolic intermediate biosynthesis; chorismate biosynthesis; chorismate from D-erythrose 4-phosphate and phosphoenolpyruvate: step 7/7. Functionally, catalyzes the anti-1,4-elimination of the C-3 phosphate and the C-6 proR hydrogen from 5-enolpyruvylshikimate-3-phosphate (EPSP) to yield chorismate, which is the branch point compound that serves as the starting substrate for the three terminal pathways of aromatic amino acid biosynthesis. This reaction introduces a second double bond into the aromatic ring system. The polypeptide is Chorismate synthase (Histophilus somni (strain 129Pt) (Haemophilus somnus)).